A 116-amino-acid polypeptide reads, in one-letter code: Large ribosomal subunit protein bL17 (116 aa).

The protein belongs to the bacterial ribosomal protein bL17 family. As to quaternary structure, part of the 50S ribosomal subunit. Contacts protein L32.

The polypeptide is Large ribosomal subunit protein bL17 (Helicobacter pylori (strain P12)).